We begin with the raw amino-acid sequence, 628 residues long: MSEKKYTFETEVDKLLHLVIHSLYSNREIFLRELVSNSSDAIEKLRYESISNAALNEDDTDYAIRIDFDKDAKTITVSDNGIGMTEEEVIENLGTIAKSGTKKFLESLTGDKSKDNELIGQFGVGFYSSFIVADKVTVRTRKAGQDKSQATKWVSDAQNGFTVETITKEKRGTEVILHIKKEHLDLLEYHVLKGLVNKYSDCINTPIQMKKVEYDKDGKQTVKDEYETVNNTKAIWLRSKDEVTDEEYQEFYKYISHDFADALMWIHNKVEGNLEYNSLLYIPQNKPFDFWNRDKDYGLSLYVRRVFIMENKELLPPYLRFVKGVIDSADLPLNVSREILQHNKVIDKIKKAITTKILSELKKLASKDKEKYQKFWDSFGQVLKEGVSDDYSNKEKIAGLLRFATTQSGDSKQTVSLADYISRMKEGQDTIYYITSDSYKAAANNPQLEAFKKKGIEVILMTDRIDEWMMSTLTEFDGKHMKSIIKGDIDLDKFETPENKEKFEKEAKDFEKVLKEIKEVLKDKVEDVRLSKRLTDSPSCVVVNDYGMSLHMQKMMEEAGQSFMPGMGMKPILELNAEHNLVQKLKNEADTEIFADLSELLLLQAMFVEGAKIEDPMAFVKLVNKYIR.

Residues 1-337 (MSEKKYTFET…SADLPLNVSR (337 aa)) form an a; substrate-binding region. Residues 338–554 (EILQHNKVID…DYGMSLHMQK (217 aa)) are b. The segment at 555 to 628 (MMEEAGQSFM…FVKLVNKYIR (74 aa)) is c.

This sequence belongs to the heat shock protein 90 family. In terms of assembly, homodimer.

It localises to the cytoplasm. In terms of biological role, molecular chaperone. Has ATPase activity. This Francisella tularensis subsp. tularensis (strain WY96-3418) protein is Chaperone protein HtpG.